The following is a 556-amino-acid chain: Protein trichome birefringence-like 1 (556 aa).

The helical; Signal-anchor for type II membrane protein transmembrane segment at 38 to 58 (TFVYAFVVTFVALTVFLAFSP) threads the bilayer. Positions 269–271 (GDS) match the GDS motif motif. The short motif at 514-528 (DCSHWCLPGVPDSWN) is the DCXHWCLPGXXDXWN motif element.

Belongs to the PC-esterase family. TBL subfamily. In terms of tissue distribution, not expressed in trichomes.

The protein localises to the membrane. Functionally, can complement TBR and is therefore functionally equivalent, but may work in different tissue. May act as a bridging protein that binds pectin and other cell wall polysaccharides. Probably involved in maintaining esterification of pectins. May be involved in the specific O-acetylation of cell wall polymers. The sequence is that of Protein trichome birefringence-like 1 (TBL1) from Arabidopsis thaliana (Mouse-ear cress).